A 258-amino-acid chain; its full sequence is UPF0246 protein Pnec_1068 (258 aa).

This sequence belongs to the UPF0246 family.

This is UPF0246 protein Pnec_1068 from Polynucleobacter necessarius subsp. necessarius (strain STIR1).